An 840-amino-acid polypeptide reads, in one-letter code: Protein translocase subunit SecA (840 aa).

ATP contacts are provided by residues Gln89, 107–111 (GEGKT), and Asp514.

This sequence belongs to the SecA family. In terms of assembly, monomer and homodimer. Part of the essential Sec protein translocation apparatus which comprises SecA, SecYEG and auxiliary proteins SecDF-YajC and YidC.

The protein localises to the cell inner membrane. Its subcellular location is the cytoplasm. The enzyme catalyses ATP + H2O + cellular proteinSide 1 = ADP + phosphate + cellular proteinSide 2.. In terms of biological role, part of the Sec protein translocase complex. Interacts with the SecYEG preprotein conducting channel. Has a central role in coupling the hydrolysis of ATP to the transfer of proteins into and across the cell membrane, serving as an ATP-driven molecular motor driving the stepwise translocation of polypeptide chains across the membrane. This Blochmanniella floridana protein is Protein translocase subunit SecA.